Reading from the N-terminus, the 197-residue chain is Peptidyl-tRNA hydrolase (197 aa).

Tyrosine 21 contacts tRNA. The active-site Proton acceptor is the histidine 26. Tyrosine 72, asparagine 74, and asparagine 120 together coordinate tRNA.

It belongs to the PTH family. As to quaternary structure, monomer.

It localises to the cytoplasm. It carries out the reaction an N-acyl-L-alpha-aminoacyl-tRNA + H2O = an N-acyl-L-amino acid + a tRNA + H(+). Functionally, hydrolyzes ribosome-free peptidyl-tRNAs (with 1 or more amino acids incorporated), which drop off the ribosome during protein synthesis, or as a result of ribosome stalling. In terms of biological role, catalyzes the release of premature peptidyl moieties from peptidyl-tRNA molecules trapped in stalled 50S ribosomal subunits, and thus maintains levels of free tRNAs and 50S ribosomes. This Alkalilimnicola ehrlichii (strain ATCC BAA-1101 / DSM 17681 / MLHE-1) protein is Peptidyl-tRNA hydrolase.